A 126-amino-acid chain; its full sequence is Ribosome-binding factor A (126 aa).

The protein belongs to the RbfA family. In terms of assembly, monomer. Binds 30S ribosomal subunits, but not 50S ribosomal subunits or 70S ribosomes.

It localises to the cytoplasm. In terms of biological role, one of several proteins that assist in the late maturation steps of the functional core of the 30S ribosomal subunit. Associates with free 30S ribosomal subunits (but not with 30S subunits that are part of 70S ribosomes or polysomes). Required for efficient processing of 16S rRNA. May interact with the 5'-terminal helix region of 16S rRNA. This Treponema pallidum (strain Nichols) protein is Ribosome-binding factor A.